The sequence spans 281 residues: Bidirectional sugar transporter SWEET14 (281 aa).

Topologically, residues 1–6 (MVLTHN) are extracellular. Residues 7–27 (VLAVTFGVLGNIISFIVFLAP) traverse the membrane as a helical segment. The MtN3/slv 1 domain maps to 11–97 (TFGVLGNIIS…ILFITYANKK (87 aa)). Residues 28 to 42 (VPTFVRICKKKSIEG) lie on the Cytoplasmic side of the membrane. A helical transmembrane segment spans residues 43–63 (FESLPYVSALFSAMLWIYYAL). The Extracellular portion of the chain corresponds to 64-70 (QKDGAGF). Residues 71-91 (LLITINAVGCFIETIYIILFI) traverse the membrane as a helical segment. The Cytoplasmic portion of the chain corresponds to 92-104 (TYANKKARISTLK). The chain crosses the membrane as a helical span at residues 105–125 (VLGLLNFLGFAAIILVCELLT). Residues 126-132 (KGSNREK) lie on the Extracellular side of the membrane. A helical membrane pass occupies residues 133–153 (VLGGICVGFSVCVFAAPLSIM). Residues 133 to 216 (VLGGICVGFS…MILYVIFKYY (84 aa)) form the MtN3/slv 2 domain. The Cytoplasmic portion of the chain corresponds to 154–166 (RVVIRTKSVEFMP). Residues 167–187 (FSLSLFLTISAITWLFYGLAI) form a helical membrane-spanning segment. The Extracellular segment spans residues 188 to 192 (KDFYV). Residues 193–213 (ALPNILGAFLGAVQMILYVIF) form a helical membrane-spanning segment. At 214 to 281 (KYYKTPLVVD…EDQMDKKMPN (68 aa)) the chain is on the cytoplasmic side. Polar residues predominate over residues 244-259 (TPASGDLTVQPQTNPD). The segment at 244 to 281 (TPASGDLTVQPQTNPDVSHPIKTHGGDLEDQMDKKMPN) is disordered. Basic and acidic residues predominate over residues 267–281 (HGGDLEDQMDKKMPN).

Belongs to the SWEET sugar transporter family. In terms of assembly, forms homooligomers and/or heterooligomers.

The protein resides in the cell membrane. Its function is as follows. Mediates both low-affinity uptake and efflux of sugar across the plasma membrane. This Arabidopsis thaliana (Mouse-ear cress) protein is Bidirectional sugar transporter SWEET14.